Reading from the N-terminus, the 902-residue chain is U3 small nucleolar RNA-associated protein 21 homolog (902 aa).

WD repeat units follow at residues 40–71 (DIEA…LLFV), 80–110 (TCLK…WDID), 119–154 (THLD…LHTT), 164–198 (TSLL…RVHE), 206–243 (GITS…MEFK), 249–284 (LSCS…QNVT), 289–332 (FGSL…RSRN), 339–373 (SFVK…QSTE), 399–438 (TALS…GQHV), 447–481 (VRSV…KRKS), 492–528 (VTAV…DSLD), 533–568 (ITHA…VREL), 570–611 (GHSN…DSIS), and 613–651 (PSVC…KHVS).

Interacts with snoRNA U3. Interacts with MPP10. Component of the ribosomal small subunit (SSU) processome composed of at least 40 protein subunits and snoRNA U3.

The protein localises to the nucleus. Its subcellular location is the nucleolus. Involved in nucleolar processing of pre-18S ribosomal RNA and ribosome assembly. The sequence is that of U3 small nucleolar RNA-associated protein 21 homolog from Schizosaccharomyces pombe (strain 972 / ATCC 24843) (Fission yeast).